The primary structure comprises 253 residues: Phosphoglycerate mutase 2 (253 aa).

At Thr3 the chain carries Phosphothreonine. Substrate contacts are provided by residues Arg10–Asn17, Cys23–Gly24, Arg62, Glu89–Tyr92, Lys100, and Arg116–Arg117. His11 functions as the Tele-phosphohistidine intermediate in the catalytic mechanism. Ser14 carries the post-translational modification Phosphoserine. The active-site Proton donor/acceptor is the Glu89. Position 118 is a phosphoserine (Ser118). Residues Tyr132 and Tyr133 each carry the phosphotyrosine modification. Ser135 carries the phosphoserine modification. Position 152 is a phosphothreonine (Thr152). Gly187 to Asn188 is a binding site for substrate.

It belongs to the phosphoglycerate mutase family. BPG-dependent PGAM subfamily. Homodimer. Interacts with ENO1. Expressed in the heart and muscle. Not found in the liver and brain.

The catalysed reaction is (2R)-2-phosphoglycerate = (2R)-3-phosphoglycerate. It carries out the reaction (2R)-3-phospho-glyceroyl phosphate = (2R)-2,3-bisphosphoglycerate + H(+). Interconversion of 3- and 2-phosphoglycerate with 2,3-bisphosphoglycerate as the primer of the reaction. Can also catalyze the reaction of EC 5.4.2.4 (synthase), but with a reduced activity. In Homo sapiens (Human), this protein is Phosphoglycerate mutase 2 (PGAM2).